The chain runs to 421 residues: Tyrosine--tRNA ligase (421 aa).

Tyr38 is an L-tyrosine binding site. A 'HIGH' region motif is present at residues 43-52 (PTGDSLHIGH). Residues Tyr169 and Gln173 each coordinate L-tyrosine. The 'KMSKS' region signature appears at 231-235 (KFGKS). Lys234 contributes to the ATP binding site. The region spanning 353–419 (KNLVDFLVDT…GKKKYTLVHI (67 aa)) is the S4 RNA-binding domain.

This sequence belongs to the class-I aminoacyl-tRNA synthetase family. TyrS type 1 subfamily. As to quaternary structure, homodimer.

It localises to the cytoplasm. The enzyme catalyses tRNA(Tyr) + L-tyrosine + ATP = L-tyrosyl-tRNA(Tyr) + AMP + diphosphate + H(+). Its function is as follows. Catalyzes the attachment of tyrosine to tRNA(Tyr) in a two-step reaction: tyrosine is first activated by ATP to form Tyr-AMP and then transferred to the acceptor end of tRNA(Tyr). The sequence is that of Tyrosine--tRNA ligase from Lactobacillus delbrueckii subsp. bulgaricus (strain ATCC BAA-365 / Lb-18).